A 207-amino-acid chain; its full sequence is Proteasome subunit beta (207 aa).

The propeptide at 1-7 (MVEAFKG) is removed in mature form; by autocatalysis. Catalysis depends on Thr-8, which acts as the Nucleophile.

This sequence belongs to the peptidase T1B family. In terms of assembly, the 20S proteasome core is composed of 14 alpha and 14 beta subunits that assemble into four stacked heptameric rings, resulting in a barrel-shaped structure. The two inner rings, each composed of seven catalytic beta subunits, are sandwiched by two outer rings, each composed of seven alpha subunits. The catalytic chamber with the active sites is on the inside of the barrel. Has a gated structure, the ends of the cylinder being occluded by the N-termini of the alpha-subunits. Is capped at one or both ends by the proteasome regulatory ATPase, PAN.

It localises to the cytoplasm. It catalyses the reaction Cleavage of peptide bonds with very broad specificity.. The formation of the proteasomal ATPase PAN-20S proteasome complex, via the docking of the C-termini of PAN into the intersubunit pockets in the alpha-rings, triggers opening of the gate for substrate entry. Interconversion between the open-gate and close-gate conformations leads to a dynamic regulation of the 20S proteasome proteolysis activity. Functionally, component of the proteasome core, a large protease complex with broad specificity involved in protein degradation. The chain is Proteasome subunit beta from Methanothrix thermoacetophila (strain DSM 6194 / JCM 14653 / NBRC 101360 / PT) (Methanosaeta thermophila).